We begin with the raw amino-acid sequence, 36 residues long: ADPGPLQDFCLADLNSPLFINGYPCRNPALAISDDF.

It belongs to the germin family. Homohexamer, possibly consisting of a trimer of dimers. In terms of processing, glycosylated.

Inhibited by iodoacetamide and trans-epoxysuccinyl-L-leucylamido(4-guanidino)butane (E-64) but not by phenylmethylsulfonyl fluoride (PMSF), pepstatin-A, ethylenediamine tetra acetic acid (EDTA) or ethylene glycol tetraacetic acid (EGTA). Its function is as follows. Cysteine protease able to degrade azocasein and benzoyl-arginine-beta-naphtylamide (BANA) in vitro. In Thevetia peruviana (Yellow oleander), this protein is Peruvianin-1.